The following is a 772-amino-acid chain: General transcription and DNA repair factor IIH helicase subunit XPD (772 aa).

A Helicase ATP-binding domain is found at 7-283; that stretch reads DLPILFPYPR…QSDSKKLQDE (277 aa). 42–49 lines the ATP pocket; sequence MPSGTGKT. 4 residues coordinate [4Fe-4S] cluster: Cys-115, Cys-133, Cys-154, and Cys-189. Positions 233 to 236 match the DEAH box motif; it reads DEAH.

This sequence belongs to the helicase family. RAD3/XPD subfamily. Component of the 7-subunit TFIIH core complex composed of XPB/ptr8, XPD/rad15, ssl1, tfb1, tfb2, tfb4 and tfb5, which is active in NER. The core complex associates with the 3-subunit CTD-kinase module TFIIK composed of mcs2/cyclin H, mcs6/cdk7 and pmh1/tfb3 to form the 10-subunit holoenzyme (holo-TFIIH) active in transcription. The cofactor is [4Fe-4S] cluster.

It is found in the nucleus. It carries out the reaction Couples ATP hydrolysis with the unwinding of duplex DNA at the replication fork by translocating in the 5'-3' direction. This creates two antiparallel DNA single strands (ssDNA). The leading ssDNA polymer is the template for DNA polymerase III holoenzyme which synthesizes a continuous strand.. The enzyme catalyses ATP + H2O = ADP + phosphate + H(+). In terms of biological role, ATP-dependent 5'-3' DNA helicase, component of the general transcription and DNA repair factor IIH (TFIIH) core complex, which is involved in general and transcription-coupled nucleotide excision repair (NER) of damaged DNA and, when complexed to TFIIK, in RNA transcription by RNA polymerase II. In NER, TFIIH acts by opening DNA around the lesion to allow the excision of the damaged oligonucleotide and its replacement by a new DNA fragment. The ATP-dependent helicase activity of XPD/rad15 is required for DNA opening. In transcription, TFIIH has an essential role in transcription initiation. When the pre-initiation complex (PIC) has been established, TFIIH is required for promoter opening and promoter escape. Phosphorylation of the C-terminal tail (CTD) of the largest subunit of RNA polymerase II by the kinase module TFIIK controls the initiation of transcription. XPD/rad15 acts by forming a bridge between TFIIK and the core-TFIIH complex. Involved in the maintenance of the fidelity of DNA replication. The sequence is that of General transcription and DNA repair factor IIH helicase subunit XPD from Schizosaccharomyces pombe (strain 972 / ATCC 24843) (Fission yeast).